A 28-amino-acid polypeptide reads, in one-letter code: GIMDSVKGLAKNLAGKLLDSLKCKITGC.

Cys-23 and Cys-28 are joined by a disulfide.

In terms of tissue distribution, expressed by the skin glands.

The protein localises to the secreted. Antibacterial activity against Gram-negative bacterium E.coli. Very weak hemolysis activity. This Rana boylii (Foothill yellow-legged frog) protein is Ranatuerin-2BYb.